Reading from the N-terminus, the 98-residue chain is Envelope glycoprotein N (98 aa).

The N-terminal stretch at 1 to 24 is a signal peptide; sequence MVSSAGLSLTLVAALCALVAPALS. The Virion surface portion of the chain corresponds to 25–60; it reads SIVSTEGPLPLLREESRINFWNAACAARGVPVDQPT. A helical membrane pass occupies residues 61-81; that stretch reads AAAVTFYICLLAVLVVALGYA. Residues 82–98 are Intravirion-facing; sequence TRTCTRMLHASPAGRRV.

This sequence belongs to the herpesviridae glycoprotein N family. As to quaternary structure, interacts (via N-terminus) with gM (via N-terminus). The gM-gN heterodimer forms the gCII complex. In terms of processing, O-glycosylated.

It localises to the virion membrane. The protein localises to the host membrane. The protein resides in the host Golgi apparatus. It is found in the host trans-Golgi network. Functionally, envelope glycoprotein necessary for proper maturation of gM and modulation of its membrane fusion activity. Also plays a critical role in virion morphogenesis. The chain is Envelope glycoprotein N from Suid herpesvirus 1 (SuHV-1).